The following is a 95-amino-acid chain: Integration host factor subunit beta (95 aa).

Belongs to the bacterial histone-like protein family. In terms of assembly, heterodimer of an alpha and a beta chain.

Functionally, this protein is one of the two subunits of integration host factor, a specific DNA-binding protein that functions in genetic recombination as well as in transcriptional and translational control. The sequence is that of Integration host factor subunit beta from Klebsiella pneumoniae subsp. pneumoniae (strain ATCC 700721 / MGH 78578).